Consider the following 347-residue polypeptide: (RS)-norcoclaurine 6-O-methyltransferase (347 aa).

S-adenosyl-L-methionine is bound by residues Gly-192, Asp-215, Asp-235, Met-236, and Lys-249. Catalysis depends on His-253, which acts as the Proton acceptor.

The protein belongs to the class I-like SAM-binding methyltransferase superfamily. Cation-independent O-methyltransferase family. COMT subfamily. Homodimer.

It catalyses the reaction norcoclaurine + S-adenosyl-L-methionine = coclaurine + S-adenosyl-L-homocysteine + H(+). It participates in alkaloid biosynthesis; (S)-reticuline biosynthesis; (S)-reticuline from (S)-norcoclaurine: step 1/4. Catalyzes the transfer of the S-methyl group of S-adenosyl-L-methionine (AdoMet) to the 6-hydroxyl group of norcoclaurine to form coclaurine. This Coptis japonica (Japanese goldthread) protein is (RS)-norcoclaurine 6-O-methyltransferase.